Reading from the N-terminus, the 503-residue chain is Na(+)-translocating NADH-quinone reductase subunit B (503 aa).

Transmembrane regions (helical) follow at residues Met55–Val75, Ile120–Ile142, Thr161–Val181, and Phe186–Phe206. Thr248 bears the FMN phosphoryl threonine mark. The next 5 helical transmembrane spans lie at Thr361–Trp381, Phe387–Gly407, Phe417–Met437, Trp452–Tyr472, and Gly475–Val495.

Belongs to the NqrB/RnfD family. As to quaternary structure, composed of six subunits; NqrA, NqrB, NqrC, NqrD, NqrE and NqrF. It depends on FMN as a cofactor.

The protein resides in the cell inner membrane. The catalysed reaction is a ubiquinone + n Na(+)(in) + NADH + H(+) = a ubiquinol + n Na(+)(out) + NAD(+). Functionally, NQR complex catalyzes the reduction of ubiquinone-1 to ubiquinol by two successive reactions, coupled with the transport of Na(+) ions from the cytoplasm to the periplasm. NqrA to NqrE are probably involved in the second step, the conversion of ubisemiquinone to ubiquinol. The protein is Na(+)-translocating NADH-quinone reductase subunit B of Chlamydia felis (strain Fe/C-56) (Chlamydophila felis).